The primary structure comprises 138 residues: Mediator of RNA polymerase II transcription subunit 22 (138 aa).

Residues 13–40 (LKSYNSRLKEDIRSMRENFEEIIRLAKG) are a coiled coil.

It belongs to the Mediator complex subunit 22 family. In terms of assembly, component of the Mediator complex.

Its subcellular location is the nucleus. Its function is as follows. Component of the Mediator complex, a coactivator involved in the regulated transcription of nearly all RNA polymerase II-dependent genes. Mediator functions as a bridge to convey information from gene-specific regulatory proteins to the basal RNA polymerase II transcription machinery. Mediator is recruited to promoters by direct interactions with regulatory proteins and serves as a scaffold for the assembly of a functional preinitiation complex with RNA polymerase II and the general transcription factors. The sequence is that of Mediator of RNA polymerase II transcription subunit 22 (MED22) from Anopheles gambiae (African malaria mosquito).